Reading from the N-terminus, the 283-residue chain is Phosphatidylserine decarboxylase proenzyme (283 aa).

Catalysis depends on charge relay system; for autoendoproteolytic cleavage activity residues Asp-89, His-146, and Ser-249. The active-site Schiff-base intermediate with substrate; via pyruvic acid; for decarboxylase activity is the Ser-249. Ser-249 is subject to Pyruvic acid (Ser); by autocatalysis.

The protein belongs to the phosphatidylserine decarboxylase family. PSD-B subfamily. Prokaryotic type I sub-subfamily. Heterodimer of a large membrane-associated beta subunit and a small pyruvoyl-containing alpha subunit. Pyruvate serves as cofactor. In terms of processing, is synthesized initially as an inactive proenzyme. Formation of the active enzyme involves a self-maturation process in which the active site pyruvoyl group is generated from an internal serine residue via an autocatalytic post-translational modification. Two non-identical subunits are generated from the proenzyme in this reaction, and the pyruvate is formed at the N-terminus of the alpha chain, which is derived from the carboxyl end of the proenzyme. The autoendoproteolytic cleavage occurs by a canonical serine protease mechanism, in which the side chain hydroxyl group of the serine supplies its oxygen atom to form the C-terminus of the beta chain, while the remainder of the serine residue undergoes an oxidative deamination to produce ammonia and the pyruvoyl prosthetic group on the alpha chain. During this reaction, the Ser that is part of the protease active site of the proenzyme becomes the pyruvoyl prosthetic group, which constitutes an essential element of the active site of the mature decarboxylase.

The protein resides in the cell membrane. It catalyses the reaction a 1,2-diacyl-sn-glycero-3-phospho-L-serine + H(+) = a 1,2-diacyl-sn-glycero-3-phosphoethanolamine + CO2. Its pathway is phospholipid metabolism; phosphatidylethanolamine biosynthesis; phosphatidylethanolamine from CDP-diacylglycerol: step 2/2. Functionally, catalyzes the formation of phosphatidylethanolamine (PtdEtn) from phosphatidylserine (PtdSer). The sequence is that of Phosphatidylserine decarboxylase proenzyme from Legionella pneumophila subsp. pneumophila (strain Philadelphia 1 / ATCC 33152 / DSM 7513).